The sequence spans 187 residues: UPF0301 protein Cpha266_0885 (187 aa).

Belongs to the UPF0301 (AlgH) family.

The protein is UPF0301 protein Cpha266_0885 of Chlorobium phaeobacteroides (strain DSM 266 / SMG 266 / 2430).